We begin with the raw amino-acid sequence, 485 residues long: GlcNAc-binding protein A (485 aa).

The N-terminal stretch at Met-1–Gly-23 is a signal peptide. The Chitin-binding type-4 domain maps to His-24 to Phe-201. A Chitin-binding type-3 domain is found at Ala-437–Trp-478.

It belongs to the GbpA family.

The protein localises to the secreted. Its function is as follows. Probably interacts with GlcNAc residues. May promote attachment to both epithelial cell surfaces and chitin. This is GlcNAc-binding protein A from Vibrio cholerae serotype O1 (strain M66-2).